Here is a 788-residue protein sequence, read N- to C-terminus: Elongator complex protein 2 (788 aa).

8 WD repeats span residues 13-51 (GANK…NKGV), 57-96 (GHEA…HLQC), 102-139 (HYSK…DEFG), 200-243 (GHED…LIDD), 279-318 (GHDD…GIWV), 336-377 (GSSG…ICDQ), 383-422 (GATK…ASGR), and 437-475 (IHGY…AGML). The tract at residues 490-530 (PDSATVPVLGLSNKAGEDDANEDDEEEEGGNKETPDITDPL) is disordered. Phosphoserine is present on Ser-492. Positions 507–517 (DDANEDDEEEE) are enriched in acidic residues. WD repeat units lie at residues 556-600 (GHGF…EIKP), 604-643 (FHSL…NTFE), 651-692 (PHTR…ADDY), 699-742 (KHTK…FELI), and 750-788 (TPAD…LAYE).

The protein belongs to the WD repeat ELP2 family. In terms of assembly, component of the elongator complex which consists of ELP1/IKI3, ELP2, ELP3, ELP4, ELP5/IKI1 and ELP6. The elongator complex is composed of two copies of the Elp123 subcomplex (composed of ELP1/IKI3, ELP2 and ELP3) and two copies of the Elp456 subcomplex (composed of ELP4, ELP5/IKI1 and ELP6). The Elp123 subcomplex forms a two-lobed scaffold, which binds the Elp456 subcomplex asymmetrically. In the complex, ELP2 interacts with ELP1/IKI3. In each lobe, ELP2 is tightly sandwiched between ELP1/IKI3 and ELP3. The Elp123 subcomplex binds tRNA through ELP1/IKI3 and ELP3 and can bind 2 tRNAs simultaneously. tRNA-binding induces conformational rearrangements which precisely position the targeted anticodon base in the active site. The Elp456 subcomplex binds tRNA and has ATPase activity. Interacts with KTI11/DPH3.

It is found in the cytoplasm. Its subcellular location is the nucleus. Its pathway is tRNA modification; 5-methoxycarbonylmethyl-2-thiouridine-tRNA biosynthesis. In terms of biological role, component of the elongator complex, a multiprotein complex which is required for multiple tRNA modifications, including mcm5U (5-methoxycarbonylmethyl uridine), mcm5s2U (5-methoxycarbonylmethyl-2-thiouridine), and ncm5U (5-carbamoylmethyl uridine). The elongator complex catalyzes formation of carboxymethyluridine in the wobble base at position 34 in tRNAs. It functions as a gamma-toxin target (TOT); disruption of the complex confers resistance to Kluyveromyces lactis toxin zymocin (pGKL1 killer toxin). May also be involved in sensitivity to Pichia inositovora toxin. ELP2 binds to microtubules. Independently, ELP2 may be involved in polarized exocytosis. This chain is Elongator complex protein 2 (ELP2), found in Saccharomyces cerevisiae (strain ATCC 204508 / S288c) (Baker's yeast).